The primary structure comprises 243 residues: rRNA adenine N-6-methyltransferase (243 aa).

Residues N11, I13, G38, E59, D84, and N101 each contribute to the S-adenosyl-L-methionine site.

Belongs to the class I-like SAM-binding methyltransferase superfamily. rRNA adenine N(6)-methyltransferase family.

The catalysed reaction is adenosine(2085) in 23S rRNA + 2 S-adenosyl-L-methionine = N(6)-dimethyladenosine(2085) in 23S rRNA + 2 S-adenosyl-L-homocysteine + 2 H(+). Its function is as follows. This protein produces a dimethylation of the adenine residue at position 2085 in 23S rRNA, resulting in reduced affinity between ribosomes and macrolide-lincosamide-streptogramin B antibiotics. The chain is rRNA adenine N-6-methyltransferase (ermA1) from Staphylococcus aureus (strain Mu50 / ATCC 700699).